Here is a 170-residue protein sequence, read N- to C-terminus: tRNA-splicing endonuclease (170 aa).

Catalysis depends on residues Tyr-110, His-116, and Lys-147.

It belongs to the tRNA-intron endonuclease family. Archaeal short subfamily. In terms of assembly, homotetramer; although the tetramer contains four active sites, only two participate in the cleavage. Therefore, it should be considered as a dimer of dimers.

The catalysed reaction is pretRNA = a 3'-half-tRNA molecule with a 5'-OH end + a 5'-half-tRNA molecule with a 2',3'-cyclic phosphate end + an intron with a 2',3'-cyclic phosphate and a 5'-hydroxyl terminus.. Endonuclease that removes tRNA introns. Cleaves pre-tRNA at the 5'- and 3'-splice sites to release the intron. The products are an intron and two tRNA half-molecules bearing 2',3' cyclic phosphate and 5'-OH termini. Recognizes a pseudosymmetric substrate in which 2 bulged loops of 3 bases are separated by a stem of 4 bp. This is tRNA-splicing endonuclease from Pyrococcus abyssi (strain GE5 / Orsay).